Here is a 469-residue protein sequence, read N- to C-terminus: Aspartyl/glutamyl-tRNA(Asn/Gln) amidotransferase subunit B (469 aa).

It belongs to the GatB/GatE family. GatB subfamily. Heterotrimer of A, B and C subunits.

It carries out the reaction L-glutamyl-tRNA(Gln) + L-glutamine + ATP + H2O = L-glutaminyl-tRNA(Gln) + L-glutamate + ADP + phosphate + H(+). The catalysed reaction is L-aspartyl-tRNA(Asn) + L-glutamine + ATP + H2O = L-asparaginyl-tRNA(Asn) + L-glutamate + ADP + phosphate + 2 H(+). Functionally, allows the formation of correctly charged Asn-tRNA(Asn) or Gln-tRNA(Gln) through the transamidation of misacylated Asp-tRNA(Asn) or Glu-tRNA(Gln) in organisms which lack either or both of asparaginyl-tRNA or glutaminyl-tRNA synthetases. The reaction takes place in the presence of glutamine and ATP through an activated phospho-Asp-tRNA(Asn) or phospho-Glu-tRNA(Gln). This is Aspartyl/glutamyl-tRNA(Asn/Gln) amidotransferase subunit B from Thermus thermophilus (strain ATCC BAA-163 / DSM 7039 / HB27).